The primary structure comprises 13477 residues: Mucin-3B (13477 aa).

A signal peptide spans 1 to 21 (MQLLGLLSILWMLKSSPGATG). Residues 219–234 (TISSTTRTTERTPLPT) show a composition bias toward low complexity. Disordered stretches follow at residues 219–243 (TISSTTRTTERTPLPTGSIHTTMSP), 327–347 (TRSTPTSETTYPASPTSTVTD), 360–383 (GTLSPTTTLPPTSSSQQTTETPMT), 513–559 (SMTT…PSTL), 622–643 (ATTPTTNLGNTTTETTSHSTPS), 815–839 (TTTNSFTTSANMEPPSTAVATTGTG), 923–968 (TSQT…STTE), 1154–1179 (PSMSASNDRTTHTESISSPPASTSTL), 1480–1511 (SPTVQNTETSSFVSMTSATTPSERPTFTSTEN), 1529–1601 (SISA…FPET), 1619–1638 (MTSTPPITSSVTPTNTVTSM), 1692–1714 (TTSTPTSETTYSTSPTSTVTDSM), 1944–1968 (TTSATMEPPSSSVAATDTGQTTFTS), 2064–2123 (TPNA…IAKS), 2170–2197 (STSMTPSTVSTSIPTSQPKTVNSSSGGI), 2275–2308 (SSSMSESSAGTTHTESISSPPATTSTLHTTAEST), 2442–2462 (RSTPTSETTYPTSPTSTVKGS), 2476–2497 (LSMETSLPPTSSSLPTTETATT), 2509–2537 (SHSTPSFSSSTIHSTVSTPTTVISSGPPT), 2591–2610 (SAMSTSDIPSSPSIQNTETS), 2672–2717 (TSTL…FSSS), 2812–2832 (TTITRSTPTSETTYPISSTST), 2845–2867 (TMTETSSSATSLPLTSPLVSTTE), 2922–2947 (SRIPSSLSTDIPTSQPTTITPSSVGI), 3074–3109 (ETPSSTVATTGTGQTTFTSSTATSPETNTLTPTPDI), 3309–3395 (TTSH…NSNS), 3420–3481 (ITTT…SHST), 3545–3565 (STTSFTSSTATTETTSRSTPS), 3654–3727 (SITT…STTA), 3740–3812 (ITTI…TTAE), 4014–4047 (TETTSRSTPSYTSAITTTETTSHRTPSFTSSIAT), 4067–4106 (TSNSTASLTSSMTTTETTSHSTPSLTSSMTATETTSHSTP), 4182–4249 (TTET…SSIT), 4269–4313 (NSTS…PSFT), 4510–4530 (SHSTPSFNSSITTTETLSHST), 4557–4617 (TETT…STSS), 4630–4651 (YSPSSFTSSITTTESPSHSTPS), 4802–4830 (TSSFTSSITSTETTSHSTPSLTSSITATG), 4953–4986 (HSLPSFTSSSTTTETPSHSPPGFSSSIATSKTIS), 5128–5203 (YTSS…ITTT), 5455–5486 (ITNTESTSRSTPSFTFSTTSTETTSHSTPSFT), 5627–5680 (TTKT…ATSK), 5834–5908 (TTSY…HSPP), 5957–5977 (STPSFTSSITTTETTSQSSPS), 5990–6017 (HSTASFTSSITTTETTSHSTRSITSSIT), 6030–6080 (TSSI…PPIF), 6120–6150 (TTETNSHSPPSFTSSIATTETPSHSPPSFTS), 6172–6197 (TESTSHSTPSFTSSIATTETTSHTPP), 6456–6481 (TETPSHSTPSFPSSITTTQSASHSTP), 6541–6598 (TKTT…TSTS), 6846–6867 (TTGTSSHNTLGLSSSVDTTKTT), 6946–6971 (ITTTETTSHSTPSITSSVTTAERTSH), 6999–7021 (TTESTSHSNPSLTSAITTTETRS), 7067–7093 (TTETTSHSPPSFTSSISITETPSHSPP), 7170–7206 (TETASHSNPSSTSSITTTESTSHSPPRSTSAIATTGI), 7225–7244 (SHSTASFTSSITSTETISHS), 7299–7329 (FTSSITTTESTSQSTPSFTFSTTSTETTSHS), 7400–7433 (SYTSSITTTETPSHSSPSFPSTITSTETISHRTP), 7476–7532 (TETI…TTST), 7578–7600 (TGTSSHSTLGLSSSVTTTKTTSH), 7731–7766 (TEITSHSPPSFTSSSTTTETPSHSTPGFSSSIATSK), 7922–7996 (SHST…PPIF), 8036–8066 (TTETNSHSPPSFTSSIATTETPSHSPPSFTS), 8088–8113 (TESTSHSTPSFTSSIATTETTSHTPP), 8372–8397 (TETPSHSTPSFPSSITTTQSASHSTP), 8457–8514 (TKTT…TSTS), 8762–8783 (TTGTSSHNTLGLSSSVDTTKTT), 8862–8887 (ITTTETTSHSTPSITSSVTTAERTSH), 8915–8941 (TTESTSHSNPSLTSAITTTETRSHSPP), 8983–9009 (TTETTSHSPPSFTSSISITETPSHSPP), 9052–9122 (AETT…TTGI), 9141–9160 (SHSTASFTSSITSTETISHS), 9215–9240 (FTSSITTTESTSQSTPSFTFSTTSTE), 9335–9366 (TSSITTTETPSHSSPSFPSSITSTETISHRTP), 9409–9465 (TETI…TTST), 9566–9589 (SHSTPSFTSSITTTKSTSHSNPSL), 9612–9674 (TTET…PPSF), 9734–9760 (TTSHGTPSLTSLIATTKSTPQNPSSFT), 9828–9859 (TSSITTTETTSHSTPRITSSITTTEKTSHSTP), 9883–9908 (TTTESTSHSNPSLTSAITNTETRSHS), 9921–9973 (TTSH…SKTI), 10076–10099 (SDSTPSFTSSVTTTETTSQSSPSF), 10120–10166 (ITTT…TVPS), 10189–10285 (ITTE…SPLS), 10389–10425 (TSSIATSETPSHSTPSFPSSITTTQSISHSTPSLSSA), 10462–10481 (TTKTTSHSPPSFTASITSTK), 10501–10537 (SHSSPSFTSSSTTTEIPSHSTPGFSSSIATSKTTSTS), 10640–10660 (TTSFPSSITTTETTSHSTPSF), 10750–10828 (TTTE…QRSP), 10887–11032 (TTET…SPSS), 11044–11065 (SHSTPSFTSSITSPETISHSTP), 11276–11317 (TGTE…SPSH), 11446–11482 (STTATPPDSTPSFTSSIATTENTSHSTPSFTSSITTT), 11566–11697 (TTET…PGFS), 11754–11779 (TKTTSHSTPDFTSSIASTKTTSHSTP), 11818–11949 (SIAT…HSPP), 12067–12103 (TSSFTSSITTTETTSQSTPSFTSSIAVTETPSDSTPV), 12186–12220 (PSYTSSIITTKTPSHSTPSFPSSITTTETISHSTP), 12280–12323 (TETT…STPI), 12364–12452 (TTET…TTET), 12468–12578 (EMTS…NTPS), 12616–12639 (FTTAETGVTSTPSSPSSLSTDIPT), 12681–12700 (SSPSIQSTETSSLVGTTSPT), 12785–12805 (IPSTHSSTLQTTPSIPSLQTS), 12985–13011 (TSSMTPESESSIIPNASSSTGTGTVPT), and 13052–13086 (SLPTILRTSSKSTHPSPPTARTSETSVATTQTPTT). Composition is skewed to low complexity over residues 513–538 (SMTTTASGPTTTNTLSSLTSSILSST) and 547–559 (TSHTTTTTPPSTL). Positions 1620 to 1638 (TSTPPITSSVTPTNTVTSM) are enriched in low complexity. Over residues 1944–1956 (TTSATMEPPSSSV) the composition is skewed to polar residues. Positions 1957–1968 (AATDTGQTTFTS) are enriched in low complexity. Over residues 2066-2091 (NASSMTTSETTYPNSPTGPVTNSMSK) the composition is skewed to polar residues. Residues 2096 to 2107 (ASMTQTSSTATS) are compositionally biased toward low complexity. The span at 2113–2123 (PSGSTTEIAKS) shows a compositional bias: polar residues. Over residues 2170–2185 (STSMTPSTVSTSIPTS) the composition is skewed to low complexity. A compositionally biased stretch (polar residues) spans 2186 to 2195 (QPKTVNSSSG). Composition is skewed to low complexity over residues 2292–2308 (SSPPATTSTLHTTAEST) and 2442–2458 (RSTPTSETTYPTSPTST). Residues 2591–2603 (SAMSTSDIPSSPS) show a composition bias toward low complexity. Low complexity-rich tracts occupy residues 2929–2944 (STDIPTSQPTTITPSS) and 3074–3097 (ETPSSTVATTGTGQTTFTSSTATS). The span at 3098 to 3109 (PETNTLTPTPDI) shows a compositional bias: polar residues. A compositionally biased stretch (low complexity) spans 3309–3359 (TTSHSTPSFTSPIATTKTSSHSSPSFTSSIATLETTSHSTPSFTSSITTNS). The span at 3360 to 3370 (HSTPRFSSSIA) shows a compositional bias: polar residues. Over residues 3371–3385 (TRETTSHSTSSFTPS) the composition is skewed to low complexity. Positions 3386–3395 (IATTKTNSNS) are enriched in polar residues. Residues 3420–3452 (ITTTETTSHSTPSFTSSMATTKTTSHSTPSFTS) show a composition bias toward low complexity. Residues 3453 to 3462 (PIATRETTSH) are compositionally biased toward polar residues. Residues 3463-3481 (STPSFTSLITTTKTTSHST) are compositionally biased toward low complexity. The span at 3740 to 3749 (ITTIETPSHG) shows a compositional bias: polar residues. A compositionally biased stretch (low complexity) spans 3750 to 3785 (TPSFTSSITSTETTSHSSPSFISSITTTEITSHSTP). A compositionally biased stretch (polar residues) spans 3786–3812 (RFTSSITTMETPSHSTPNFTSSITTAE). 2 stretches are compositionally biased toward low complexity: residues 4020–4042 (STPSYTSAITTTETTSHRTPSFT) and 4067–4096 (TSNSTASLTSSMTTTETTSHSTPSLTSSMT). Positions 4097–4106 (ATETTSHSTP) are enriched in polar residues. Low complexity-rich tracts occupy residues 4182–4228 (TTET…PSFT) and 4237–4249 (TSHSTPSFTSSIT). A compositionally biased stretch (low complexity) spans 4557-4574 (TETTSNSSPSFTSSITNT). The span at 4575–4601 (KTTSYSPPGFTSSIPATETTSRSPPGF) shows a compositional bias: polar residues. Low complexity predominate over residues 4602–4617 (TSSITTTETTSHSTSS). A compositionally biased stretch (low complexity) spans 4802–4827 (TSSFTSSITSTETTSHSTPSLTSSIT). Low complexity predominate over residues 5137–5158 (TPSHITPSFTSTITTSESTSHS). Polar residues predominate over residues 5159 to 5170 (NPSLTSAITTTE). 2 stretches are compositionally biased toward low complexity: residues 5174-5203 (HSPPIFTSSITTTETTSHNTPSFTSSITTT) and 5458-5486 (TESTSRSTPSFTFSTTSTETTSHSTPSFT). Residues 5834 to 5858 (TTSYSTPSITSSITTTERTSHSTPS) show a composition bias toward low complexity. The span at 5859–5874 (YTSSIATRETPSHTVP) shows a compositional bias: polar residues. The span at 5875–5889 (SFTSSITTTESTSHS) shows a compositional bias: low complexity. Over residues 5890–5901 (NPSLTSAITTTE) the composition is skewed to polar residues. Residues 6045 to 6059 (SFTSSITTTDSTSHS) are compositionally biased toward low complexity. Polar residues predominate over residues 6060–6071 (NPSLTSAITTTE). The span at 6172 to 6185 (TESTSHSTPSFTSS) shows a compositional bias: low complexity. Polar residues predominate over residues 6186–6197 (IATTETTSHTPP). A compositionally biased stretch (low complexity) spans 6456–6475 (TETPSHSTPSFPSSITTTQS). The segment covering 6852–6867 (HNTLGLSSSVDTTKTT) has biased composition (polar residues). Residues 6946–6965 (ITTTETTSHSTPSITSSVTT) show a composition bias toward low complexity. Residues 6999–7018 (TTESTSHSNPSLTSAITTTE) show a composition bias toward polar residues. Positions 7172–7206 (TASHSNPSSTSSITTTESTSHSPPRSTSAIATTGI) are enriched in low complexity. 2 stretches are compositionally biased toward low complexity: residues 7300–7329 (TSSITTTESTSQSTPSFTFSTTSTETTSHS) and 7400–7427 (SYTSSITTTETPSHSSPSFPSTITSTET). Polar residues predominate over residues 7476–7491 (TETISHSPPSFTSLTN). Residues 7492–7532 (STETTSHSPPSFTSSSTTTETPSHSTPGFSSSIATSKTTST) show a composition bias toward low complexity. 2 stretches are compositionally biased toward low complexity: residues 7734 to 7766 (TSHSPPSFTSSSTTTETPSHSTPGFSSSIATSK) and 7922 to 7944 (SHSTRSITSSITTTKRTSHSTPS). The span at 7945 to 7987 (YTSSIATSETPSHTVPSFTSLITTTDSTSHSNPSLTSAITTTE) shows a compositional bias: polar residues. A compositionally biased stretch (low complexity) spans 8088–8101 (TESTSHSTPSFTSS). Residues 8102–8113 (IATTETTSHTPP) are compositionally biased toward polar residues. The span at 8372–8391 (TETPSHSTPSFPSSITTTQS) shows a compositional bias: low complexity. The segment covering 8768-8783 (HNTLGLSSSVDTTKTT) has biased composition (polar residues). Residues 8862–8881 (ITTTETTSHSTPSITSSVTT) show a composition bias toward low complexity. Positions 8915-8934 (TTESTSHSNPSLTSAITTTE) are enriched in polar residues. Low complexity-rich tracts occupy residues 9067–9081 (PTTETTSHSPPSFTS) and 9088–9122 (TASHSNPSSTSSITTTESTSHSPPRSTSAIATTGI). Positions 9335–9360 (TSSITTTETPSHSSPSFPSSITSTET) are enriched in low complexity. Positions 9409–9424 (TETISHSPPSFTSLTN) are enriched in polar residues. 3 stretches are compositionally biased toward low complexity: residues 9425–9465 (STET…TTST), 9566–9585 (SHSTPSFTSSITTTKSTSHS), and 9612–9624 (TTETTSHRTPSFT). The segment covering 9625-9661 (SSIATAETTSHSPPSFTSLITTSETPSHSNPSFTSLI) has biased composition (polar residues). Residues 9662-9674 (TTTESTSHSPPSF) are compositionally biased toward low complexity. Composition is skewed to polar residues over residues 9892 to 9903 (NPSLTSAITNTE) and 9921 to 9933 (TTSHSPPSFTSLI). Residues 9934-9973 (TSTETTSHSPPSFTSSSTTTETPSHSTPGFSSSIATSKTI) show a composition bias toward low complexity. The segment covering 10120–10130 (ITTTETTSHST) has biased composition (low complexity). Residues 10131–10166 (PNITSSVTTTERTSHSTPSYTSSIATGETPSHTVPS) are compositionally biased toward polar residues. 2 stretches are compositionally biased toward low complexity: residues 10196–10271 (HSPP…SFTS) and 10394–10421 (TSETPSHSTPSFPSSITTTQSISHSTPS). Positions 10750-10791 (TTTETTSHSPPRFTSSITTTKTPSDSTPVFTPSIATSETSSH) are enriched in polar residues. Composition is skewed to low complexity over residues 10792-10828 (STPGYTSSTATTETMSHSTSSFTSSITTTETTSQRSP), 10887-10937 (TTET…SSIT), and 10950-11032 (PSSI…SPSS). Low complexity predominate over residues 11278 to 11291 (TETTSHSPPHFTSS). The segment covering 11292-11317 (ITRTKTTSHRPPTFTSSITTTESPSH) has biased composition (polar residues). Residues 11566-11682 (TTETTSHSIP…SHSTSGFTSS (117 aa)) show a composition bias toward low complexity. Polar residues-rich tracts occupy residues 11683–11697 (NATTETTSHSTPGFS) and 11754–11769 (TKTTSHSTPDFTSSIA). Composition is skewed to low complexity over residues 11770–11779 (STKTTSHSTP) and 11818–11880 (SIAT…SHST). 2 stretches are compositionally biased toward polar residues: residues 11881-11896 (PSFTSSIATIETTSHS) and 11903-11912 (LIPTTKTTLH). 2 stretches are compositionally biased toward low complexity: residues 11913-11949 (SPPSFTSSITTTKTTSHSTSSLTSSMPTTKTTSHSPP) and 12067-12091 (TSSFTSSITTTETTSQSTPSFTSSI). The segment covering 12092–12103 (AVTETPSDSTPV) has biased composition (polar residues). The span at 12280–12309 (TETTSHSAPNFSSSITSTETTSHSTPSFTS) shows a compositional bias: low complexity. Over residues 12310-12323 (AITSTETTSHSTPI) the composition is skewed to polar residues. Residues 12364–12412 (TTETTSHSTPGFASSITTTKTTSHSTPSFTSSIATSNTTSSSTPGFTSS) show a composition bias toward low complexity. The span at 12413 to 12439 (IATTETTSRSTPGFTSSIVTTETTSPH) shows a compositional bias: polar residues. Low complexity predominate over residues 12440–12452 (TPGFTSSITTTET). Residues 12468 to 12477 (EMTSHSTPSL) are compositionally biased toward polar residues. 6 stretches are compositionally biased toward low complexity: residues 12478–12569 (TFSI…VTTP), 12624–12639 (TSTPSSPSSLSTDIPT), 12681–12692 (SSPSIQSTETSS), 12794–12805 (QTTPSIPSLQTS), 12990–13003 (PESESSIIPNASSS), and 13073–13086 (TSETSVATTQTPTT). Residues 13130 to 13163 (SGDRCQLQTRCQNGGQWDGLKCQCPSTFYGSSCE) form the EGF-like domain. 2 cysteine pairs are disulfide-bonded: Cys-13134-Cys-13140 and Cys-13153-Cys-13162. Residues 13172-13297 (DVVETEVGME…DSIKVNNNSK (126 aa)) form the SEA domain. Residues 13381–13401 (LVGGLTAGAALLVLLLLALGV) form a helical membrane-spanning segment.

Post-translationally, highly O-glycosylated and probably also N-glycosylated. In terms of tissue distribution, fetal and adult small intestine and fetal and adult colon.

The protein resides in the membrane. Functionally, major glycoprotein component of a variety of mucus gels. Thought to provide a protective, lubricating barrier against particles and infectious agents at mucosal surfaces. In Homo sapiens (Human), this protein is Mucin-3B.